Consider the following 259-residue polypeptide: Putative electron transfer flavoprotein subunit YgcR (259 aa).

This sequence belongs to the ETF beta-subunit/FixA family. In terms of assembly, ygcQ and YgcR form a heterodimer.

Functionally, may play a role in a redox process. This is Putative electron transfer flavoprotein subunit YgcR (ygcR) from Escherichia coli (strain K12).